A 770-amino-acid polypeptide reads, in one-letter code: Multifunctional tryptophan biosynthesis protein (770 aa).

The Glutamine amidotransferase type-1 domain maps to 25–225; it reads NVILIDNYDS…LKLTAGTWEG (201 aa). 76 to 78 contributes to the L-glutamine binding site; the sequence is GPG. The active-site Nucleophile; for GATase activity is Cys104. L-glutamine contacts are provided by residues Gln108 and 154 to 155; that span reads SL. Residues His199 and Glu201 each act as for GATase activity in the active site. The disordered stretch occupies residues 228-251; it reads KHFGEQSSTTKATVPSNPPPKTDK. The segment covering 232-242 has biased composition (polar residues); that stretch reads EQSSTTKATVP. Residues 255 to 519 form an indole-3-glycerol phosphate synthase region; the sequence is ILERIYDHRR…DTATFIAELL (265 aa). Residues 535–770 form an N-(5'-phosphoribosyl)anthranilate isomerase region; the sequence is LVKICGTRSE…RAFVQAVRGL (236 aa).

The catalysed reaction is N-(5-phospho-beta-D-ribosyl)anthranilate = 1-(2-carboxyphenylamino)-1-deoxy-D-ribulose 5-phosphate. The enzyme catalyses 1-(2-carboxyphenylamino)-1-deoxy-D-ribulose 5-phosphate + H(+) = (1S,2R)-1-C-(indol-3-yl)glycerol 3-phosphate + CO2 + H2O. It catalyses the reaction chorismate + L-glutamine = anthranilate + pyruvate + L-glutamate + H(+). Its pathway is amino-acid biosynthesis; L-tryptophan biosynthesis; L-tryptophan from chorismate: step 1/5. It functions in the pathway amino-acid biosynthesis; L-tryptophan biosynthesis; L-tryptophan from chorismate: step 3/5. It participates in amino-acid biosynthesis; L-tryptophan biosynthesis; L-tryptophan from chorismate: step 4/5. Functionally, trifunctional enzyme bearing the Gln amidotransferase (GATase) domain of anthranilate synthase, indole-glycerolphosphate synthase, and phosphoribosylanthranilate isomerase activities. This Aspergillus niger protein is Multifunctional tryptophan biosynthesis protein (trpC).